Reading from the N-terminus, the 145-residue chain is Synaptojanin-2-binding protein (145 aa).

The Cytoplasmic segment spans residues 1 to 117 (MNGRVDYLVT…GPQGEGEPSG (117 aa)). Residues 13-100 (EINLTRGPSG…AVSLRVQHRL (88 aa)) form the PDZ domain. Residues 118 to 138 (IPIAMVLVPVFALTMVAAWAF) form a helical; Anchor for type IV membrane protein membrane-spanning segment. Over 139-145 (MRYRQRL) the chain is Mitochondrial intermembrane.

As to quaternary structure, binds (via the PDZ domain) to isoform 2A of SYNJ2 (via the unique motif in the C-terminus). Interacts (via C-terminus) with RALBP1. Interacts (via PDZ domain) with ACVR2A (via C-terminus) and ACVR2B (via C-terminus). Forms a ternary complex with ACVR2A and RALBP1. Interacts with MAPK12. Interacts with DLL1; enhances DLL1 protein stability, and promotes notch signaling in endothelial cells.

The protein localises to the mitochondrion outer membrane. Its subcellular location is the cytoplasm. It is found in the perinuclear region. Functionally, regulates endocytosis of activin type 2 receptor kinases through the Ral/RALBP1-dependent pathway and may be involved in suppression of activin-induced signal transduction. In Bos taurus (Bovine), this protein is Synaptojanin-2-binding protein.